Here is a 42-residue protein sequence, read N- to C-terminus: Potassium channel toxin gamma-KTx 1.10 (42 aa).

4 disulfides stabilise this stretch: C5–C23, C11–C34, C20–C39, and C24–C41.

Expressed by the venom gland.

It is found in the secreted. In terms of biological role, blocks human Kv11.1/KCNH2/ERG1 potassium channels (reversible, IC(50)=3.4 nM). At high toxin concentrations, block of Kv11.1/KCNH2/ERG1 macroscopic current is almost complete. Does not accelerate the kinetics of the closing process and has no effect on the activation and inactivation kinetics of the Kv11.1/KCNH2/ERG1 channels. The protein is Potassium channel toxin gamma-KTx 1.10 of Centruroides margaritatus (Central American bark Scorpion).